The sequence spans 132 residues: Acid shock protein (132 aa).

The signal sequence occupies residues 1-21; sequence MKKVLALIVAATMGLSSVAFA. The propeptide occupies 22–69; sequence AETTAAATAAPAATSTTAAPAVEKAAPAKATHHKKHKATKQTTEQKAQ. A compositionally biased stretch (low complexity) spans 30 to 50; that stretch reads AAPAATSTTAAPAVEKAAPAK. Residues 30 to 132 form a disordered region; it reads AAPAATSTTA…AKKSATAPAA (103 aa). Over residues 51 to 60 the composition is skewed to basic residues; that stretch reads ATHHKKHKAT. A compositionally biased stretch (low complexity) spans 61 to 99; that stretch reads KQTTEQKAQAAKKAVKKAPAQKAQAAKKAVKKAPVQKAQ. The segment covering 100 to 124 has biased composition (basic residues); sequence AAKKHVKKAPAQKAQAAKKHHKTAK.

It belongs to the Asr family. In terms of processing, proteolytic processing gives rise to the active protein.

The protein localises to the periplasm. In terms of biological role, required for growth and/or survival at acidic conditions. The protein is Acid shock protein of Yersinia enterocolitica serotype O:8 / biotype 1B (strain NCTC 13174 / 8081).